A 232-amino-acid chain; its full sequence is Small ribosomal subunit protein uS3 (232 aa).

One can recognise a KH type-2 domain in the interval 39 to 107 (IREILHKELK…DVVINIVEIR (69 aa)).

This sequence belongs to the universal ribosomal protein uS3 family. In terms of assembly, part of the 30S ribosomal subunit. Forms a tight complex with proteins S10 and S14.

Functionally, binds the lower part of the 30S subunit head. Binds mRNA in the 70S ribosome, positioning it for translation. The chain is Small ribosomal subunit protein uS3 from Rhodopseudomonas palustris (strain BisB18).